A 290-amino-acid chain; its full sequence is Pyridoxal 5'-phosphate synthase subunit PdxS (290 aa).

Residue D22 participates in D-ribose 5-phosphate binding. The Schiff-base intermediate with D-ribose 5-phosphate role is filled by K79. G151 contributes to the D-ribose 5-phosphate binding site. Residue R163 participates in D-glyceraldehyde 3-phosphate binding. Residues G212 and 233 to 234 (GS) each bind D-ribose 5-phosphate.

It belongs to the PdxS/SNZ family. In the presence of PdxT, forms a dodecamer of heterodimers.

The enzyme catalyses aldehydo-D-ribose 5-phosphate + D-glyceraldehyde 3-phosphate + L-glutamine = pyridoxal 5'-phosphate + L-glutamate + phosphate + 3 H2O + H(+). Its pathway is cofactor biosynthesis; pyridoxal 5'-phosphate biosynthesis. Catalyzes the formation of pyridoxal 5'-phosphate from ribose 5-phosphate (RBP), glyceraldehyde 3-phosphate (G3P) and ammonia. The ammonia is provided by the PdxT subunit. Can also use ribulose 5-phosphate and dihydroxyacetone phosphate as substrates, resulting from enzyme-catalyzed isomerization of RBP and G3P, respectively. This is Pyridoxal 5'-phosphate synthase subunit PdxS from Clostridium botulinum (strain Langeland / NCTC 10281 / Type F).